Consider the following 180-residue polypeptide: GTP cyclohydrolase 1 (180 aa).

The Zn(2+) site is built by cysteine 71, histidine 74, and cysteine 142.

It belongs to the GTP cyclohydrolase I family. In terms of assembly, toroid-shaped homodecamer, composed of two pentamers of five dimers.

The catalysed reaction is GTP + H2O = 7,8-dihydroneopterin 3'-triphosphate + formate + H(+). It functions in the pathway cofactor biosynthesis; 7,8-dihydroneopterin triphosphate biosynthesis; 7,8-dihydroneopterin triphosphate from GTP: step 1/1. The sequence is that of GTP cyclohydrolase 1 (folE) from Helicobacter pylori (strain J99 / ATCC 700824) (Campylobacter pylori J99).